The primary structure comprises 534 residues: MAGLLSSCCGRVYALLPDSAHPSAQQKTPFGVNRYVLLVIYMIYALLTSSVYFGWRSMSAMLFKSGQFSWVCTGESADTSPEEGETDYLCALQDTKVQSLFTIAMACHFTCSAVAGYLLDTVGPKAVALLGQTFNALAWILLAFSGPNFRSVYPAFVFMGAGADVSVYPTLLIVNLFPGSTALIMATLGACISLSFFVPLVLRTMWESTGISFEAVCIGYAVAGPILCAVVAFFFIPFKAFKGVDNFSACVEAEKLANSPTAQSSPKAVDSPPCDEGASSRGRLAVSHNTERTAPDDEQEKDNTERISLSDLACDPRFKKQKVSFSSQAFTFLYFGICLYFTVCGWVMAYYQEAAGRFLCNDAEYTLEILTPLSTIPCLLFGVVINRIGIMPVILMLNTIGLLTYVCVVAAESVVAQYFSVIFFFMYISIFTTQMYVFVESTFDSAHFGKLIGVASLIGGLLSLISNVLYGDVTVGMLNGDTRPVVIALLAVIILMYPILLAMRTKRNRKKQMEQEDIRSRVLELKAAHAADAA.

Helical transmembrane passes span 35–55, 99–119, 126–146, 154–174, 182–202, and 216–236; these read YVLL…YFGW, SLFT…GYLL, AVAL…AFSG, PAFV…LLIV, ALIM…PLVL, and VCIG…FFFI. N246 is a glycosylation site (N-linked (GlcNAc...) asparagine). Residues 261 to 302 form a disordered region; the sequence is TAQSSPKAVDSPPCDEGASSRGRLAVSHNTERTAPDDEQEKD. Basic and acidic residues predominate over residues 289 to 302; sequence NTERTAPDDEQEKD. Transmembrane regions (helical) follow at residues 329–349, 365–385, 388–408, 419–439, 451–471, and 483–503; these read AFTF…WVMA, YTLE…GVVI, IGIM…YVCV, FSVI…YVFV, LIGV…VLYG, and RPVV…LLAM.

This sequence belongs to the SLC43A transporter (TC 2.A.1.44) family.

Its subcellular location is the cell membrane. It carries out the reaction L-arginine(in) = L-arginine(out). In terms of biological role, selective L-arginine transporter that is essential for parasite survival and virulence. Does not require other inorganic ions such as sodium, chloride, potassium or calcium. This is Arginine transporter 1 from Toxoplasma gondii (strain ATCC 50611 / Me49).